Reading from the N-terminus, the 241-residue chain is Ribonuclease PH (241 aa).

Residues Arg87 and 125-127 (GTR) each bind phosphate.

It belongs to the RNase PH family. As to quaternary structure, homohexameric ring arranged as a trimer of dimers.

The catalysed reaction is tRNA(n+1) + phosphate = tRNA(n) + a ribonucleoside 5'-diphosphate. Its function is as follows. Phosphorolytic 3'-5' exoribonuclease that plays an important role in tRNA 3'-end maturation. Removes nucleotide residues following the 3'-CCA terminus of tRNAs; can also add nucleotides to the ends of RNA molecules by using nucleoside diphosphates as substrates, but this may not be physiologically important. Probably plays a role in initiation of 16S rRNA degradation (leading to ribosome degradation) during starvation. The polypeptide is Ribonuclease PH (Salinispora arenicola (strain CNS-205)).